Consider the following 244-residue polypeptide: Probable transcriptional regulatory protein MMOB1910 (244 aa).

Belongs to the TACO1 family.

The protein resides in the cytoplasm. In Mycoplasma mobile (strain ATCC 43663 / 163K / NCTC 11711) (Mesomycoplasma mobile), this protein is Probable transcriptional regulatory protein MMOB1910.